Here is an 881-residue protein sequence, read N- to C-terminus: EEF1AKMT4-ECE2 readthrough transcript protein (881 aa).

Residues 1-160 are methyltransferase-like region; it reads MASPRTPVSP…VHTVDQVLSE (160 aa). The Cytoplasmic portion of the chain corresponds to 1–178; it reads MASPRTPVSP…QLFGSHTQLE (178 aa). S-adenosyl-L-methionine-binding residues include tryptophan 26 and tyrosine 30. The residue at position 39 (tyrosine 39) is a Phosphotyrosine. S-adenosyl-L-methionine is bound by residues tryptophan 41, glycine 66, 88-89, 113-114, and lysine 130; these read DY and DV. Histidine 174 carries the phosphoserine modification. Residues 179–199 traverse the membrane as a helical; Signal-anchor for type II membrane protein segment; it reads LVLAGLILVLAALLLGCLVAL. Residues 200–881 are Lumenal-facing; sequence WVHRDPAHST…MNPGQLCEVW (682 aa). Residues 209 to 881 form the Peptidase M13 domain; the sequence is TCVTEACIRV…MNPGQLCEVW (673 aa). Cystine bridges form between cysteine 210–cysteine 215, cysteine 233–cysteine 866, cysteine 241–cysteine 826, cysteine 297–cysteine 546, and cysteine 755–cysteine 878. Residues asparagine 277, asparagine 281, asparagine 322, asparagine 382, asparagine 427, asparagine 494, and asparagine 650 are each glycosylated (N-linked (GlcNAc...) asparagine). Histidine 718 serves as a coordination point for Zn(2+). The active site involves glutamate 719. Histidine 722 provides a ligand contact to Zn(2+). Asparagine 743 and asparagine 751 each carry an N-linked (GlcNAc...) asparagine glycan. Residue glutamate 778 participates in Zn(2+) binding. The Proton donor role is filled by aspartate 782.

In the N-terminal section; belongs to the methyltransferase superfamily. This sequence in the C-terminal section; belongs to the peptidase M13 family. It depends on Zn(2+) as a cofactor. As to expression, expressed at high levels in central nervous system. Expressed in adrenal glands, ovary and uterus, and at low levels in heart.

It localises to the golgi apparatus membrane. The protein resides in the cytoplasmic vesicle. The protein localises to the secretory vesicle membrane. It carries out the reaction Hydrolysis of the 21-Trp-|-Val-22 bond in big endothelin to form endothelin 1.. Inhibited by phosphoramidon. Its function is as follows. Converts big endothelin-1 to endothelin-1. May also have methyltransferase activity. May play a role in amyloid-beta processing. This chain is EEF1AKMT4-ECE2 readthrough transcript protein, found in Mus musculus (Mouse).